The primary structure comprises 312 residues: Methionyl-tRNA formyltransferase (312 aa).

111–114 (SLLP) provides a ligand contact to (6S)-5,6,7,8-tetrahydrofolate.

The protein belongs to the Fmt family.

The catalysed reaction is L-methionyl-tRNA(fMet) + (6R)-10-formyltetrahydrofolate = N-formyl-L-methionyl-tRNA(fMet) + (6S)-5,6,7,8-tetrahydrofolate + H(+). Its function is as follows. Attaches a formyl group to the free amino group of methionyl-tRNA(fMet). The formyl group appears to play a dual role in the initiator identity of N-formylmethionyl-tRNA by promoting its recognition by IF2 and preventing the misappropriation of this tRNA by the elongation apparatus. The polypeptide is Methionyl-tRNA formyltransferase (Rhodopseudomonas palustris (strain HaA2)).